The chain runs to 120 residues: Aspartate 1-decarboxylase (120 aa).

Ser-25 (schiff-base intermediate with substrate; via pyruvic acid) is an active-site residue. Ser-25 bears the Pyruvic acid (Ser) mark. Thr-57 serves as a coordination point for substrate. Tyr-58 functions as the Proton donor in the catalytic mechanism. 73-75 (GAA) contributes to the substrate binding site.

It belongs to the PanD family. In terms of assembly, heterooctamer of four alpha and four beta subunits. Pyruvate is required as a cofactor. Post-translationally, is synthesized initially as an inactive proenzyme, which is activated by self-cleavage at a specific serine bond to produce a beta-subunit with a hydroxyl group at its C-terminus and an alpha-subunit with a pyruvoyl group at its N-terminus.

The protein localises to the cytoplasm. The catalysed reaction is L-aspartate + H(+) = beta-alanine + CO2. Its pathway is cofactor biosynthesis; (R)-pantothenate biosynthesis; beta-alanine from L-aspartate: step 1/1. In terms of biological role, catalyzes the pyruvoyl-dependent decarboxylation of aspartate to produce beta-alanine. This is Aspartate 1-decarboxylase from Cupriavidus taiwanensis (strain DSM 17343 / BCRC 17206 / CCUG 44338 / CIP 107171 / LMG 19424 / R1) (Ralstonia taiwanensis (strain LMG 19424)).